Consider the following 100-residue polypeptide: Small ribosomal subunit protein uS14c (100 aa).

The protein belongs to the universal ribosomal protein uS14 family. In terms of assembly, part of the 30S ribosomal subunit.

The protein localises to the plastid. Binds 16S rRNA, required for the assembly of 30S particles. In Epifagus virginiana (Beechdrops), this protein is Small ribosomal subunit protein uS14c.